The following is a 126-amino-acid chain: Small ribosomal subunit protein uS8 (126 aa).

It belongs to the universal ribosomal protein uS8 family. In terms of assembly, part of the 30S ribosomal subunit. Contacts proteins S5 and S12.

Its function is as follows. One of the primary rRNA binding proteins, it binds directly to 16S rRNA central domain where it helps coordinate assembly of the platform of the 30S subunit. The polypeptide is Small ribosomal subunit protein uS8 (Lawsonia intracellularis (strain PHE/MN1-00)).